The sequence spans 91 residues: Putative regulatory protein Tlet_1629 (91 aa).

Belongs to the RemA family.

The polypeptide is Putative regulatory protein Tlet_1629 (Pseudothermotoga lettingae (strain ATCC BAA-301 / DSM 14385 / NBRC 107922 / TMO) (Thermotoga lettingae)).